Reading from the N-terminus, the 73-residue chain is Antimicrobial peptide lumbricin-PG (73 aa).

A signal peptide spans 1–14; the sequence is MLLTISDFLFLSLT. A disordered region spans residues 25 to 48; the sequence is RPWSDRKNNYSGPQFTYPPEKAPP.

Its subcellular location is the secreted. Functionally, displays antimicrobial activity against the Gram-positive bacterium S.aureus ATCC 2592, the Gram-negative bacteria E.coli ATCC 25922 and P.aeruginosa ATCC 27853, and the fungus C.albicans ATCC 2002. Displays stronger activity against P.aeruginosa and S.aureus than E.coli. Displays very weak hemolytic activity. The sequence is that of Antimicrobial peptide lumbricin-PG from Metaphire guillelmi (Earthworm).